A 655-amino-acid polypeptide reads, in one-letter code: MVLSTEENTGVDSVNLPSGETGLGEKDQESVNNLCSQYEEKVRPCIDLIDSLRALGVEQDLALPAIAVIGDQSSGKSSVLEALSGVALPRGSGIVTRCPLVLKLRKLNEGEEWRGKVSYDDIEVELSDPSEVEEAINKGQNFIAGVGLGISDKLISLDVSSPNVPDLTLIDLPGITRVAVGNQPADIGRQIKRLIKTYIQKQETINLVVVPSNVDIATTEALSMAQEVDPEGDRTIGILTKPDLVDRGTEDKVVDVVRNLVYHLKKGYMIVKCRGQQDIQEQLSLTEALQNEQIFFKEHPHFRVLLEDGKATVPCLAERLTAELISHICKSLPLLENQIKESHQSASEELQKYGMDIPEDDSEKTFFLIEKINAFNQDITALVQGEENVAEGECRLFTRLRKEFLSWSKEIEKNFAKGYAVLYNEVWAFEKQYRGRELPGFVNYKTFENIIRRQIKTLEEPAIEMLHTVTEIVRAAFTSVSEKNFSEFYNLHRTTKSKLEDIRLEQEKEAEMSIRLHFKMEQIIYCQDQIYRGALQKVREEEAEEEKKTKHGTSSSSQSQDLQTSSMAEIFQHLNAYRQEAHNRISSHVPLIIQYFILKMFAERLQKGMLQLLQDKDSCSWLLKEQSDTSEKRKFLKERLARLAQARRRLAKFPG.

Over residues 1–18 the composition is skewed to polar residues; the sequence is MVLSTEENTGVDSVNLPS. The segment at 1 to 28 is disordered; sequence MVLSTEENTGVDSVNLPSGETGLGEKDQ. Positions 60-333 constitute a Dynamin-type G domain; it reads DLALPAIAVI…LISHICKSLP (274 aa). The tract at residues 70-77 is G1 motif; sequence GDQSSGKS. 70–77 lines the GTP pocket; sequence GDQSSGKS. The G2 motif stretch occupies residues 95–97; that stretch reads VTR. The G3 motif stretch occupies residues 171–174; sequence DLPG. Residues 171–175 and 240–243 each bind GTP; these read DLPGI and TKPD. The segment at 240–243 is G4 motif; the sequence is TKPD. Residues 272–275 form a G5 motif region; that stretch reads KCRG. Positions 542-562 are disordered; the sequence is EAEEEKKTKHGTSSSSQSQDL. A compositionally biased stretch (low complexity) spans 552–562; it reads GTSSSSQSQDL. The GED domain maps to 567-655; it reads MAEIFQHLNA…ARRRLAKFPG (89 aa).

It belongs to the TRAFAC class dynamin-like GTPase superfamily. Dynamin/Fzo/YdjA family.

It is found in the cytoplasm. Interferon-induced dynamin-like GTPase with antiviral activity against vesicular stomatitis virus (VSV) and Hantaan virus (HNTV). This chain is Interferon-induced GTP-binding protein Mx2 (Mx2), found in Mus musculus (Mouse).